Reading from the N-terminus, the 771-residue chain is U-box domain-containing protein 6 (771 aa).

One can recognise a U-box domain in the interval 274–348; sequence IPPEELRCPI…ASWCEQNGIT (75 aa). The tract at residues 394–415 is disordered; sequence EESSTIESERQQKEKNNAPDEV. Residues 400-411 are compositionally biased toward basic and acidic residues; it reads ESERQQKEKNNA. ARM repeat units follow at residues 456-499, 502-542, 544-581, 583-622, and 625-664; these read EEAR…NLAV, NRNK…CLEK, KPVI…NLST, SPNI…NLAS, and EGKE…ILCT. The span at 706–722 shows a compositional bias: basic and acidic residues; sequence EQRHRDQPSPNKEEAPR. Residues 706-751 form a disordered region; the sequence is EQRHRDQPSPNKEEAPRKTVSAPMAIPAPVSAPESEVKPLTKSISR.

The catalysed reaction is S-ubiquitinyl-[E2 ubiquitin-conjugating enzyme]-L-cysteine + [acceptor protein]-L-lysine = [E2 ubiquitin-conjugating enzyme]-L-cysteine + N(6)-ubiquitinyl-[acceptor protein]-L-lysine.. It functions in the pathway protein modification; protein ubiquitination. Its function is as follows. Functions as an E3 ubiquitin ligase. This is U-box domain-containing protein 6 (PUB6) from Arabidopsis thaliana (Mouse-ear cress).